Consider the following 180-residue polypeptide: ATP synthase subunit delta (180 aa).

This sequence belongs to the ATPase delta chain family. F-type ATPases have 2 components, F(1) - the catalytic core - and F(0) - the membrane proton channel. F(1) has five subunits: alpha(3), beta(3), gamma(1), delta(1), epsilon(1). F(0) has three main subunits: a(1), b(2) and c(10-14). The alpha and beta chains form an alternating ring which encloses part of the gamma chain. F(1) is attached to F(0) by a central stalk formed by the gamma and epsilon chains, while a peripheral stalk is formed by the delta and b chains.

It is found in the cell membrane. F(1)F(0) ATP synthase produces ATP from ADP in the presence of a proton or sodium gradient. F-type ATPases consist of two structural domains, F(1) containing the extramembraneous catalytic core and F(0) containing the membrane proton channel, linked together by a central stalk and a peripheral stalk. During catalysis, ATP synthesis in the catalytic domain of F(1) is coupled via a rotary mechanism of the central stalk subunits to proton translocation. Functionally, this protein is part of the stalk that links CF(0) to CF(1). It either transmits conformational changes from CF(0) to CF(1) or is implicated in proton conduction. This is ATP synthase subunit delta from Bacillus cytotoxicus (strain DSM 22905 / CIP 110041 / 391-98 / NVH 391-98).